Reading from the N-terminus, the 481-residue chain is Cysteine--tRNA ligase (481 aa).

C29 is a Zn(2+) binding site. A 'HIGH' region motif is present at residues 31 to 41 (PTVYDYSHLGH). Residues C210, H235, and E239 each coordinate Zn(2+). The 'KMSKS' region motif lies at 272 to 276 (KMSKS). K275 provides a ligand contact to ATP.

It belongs to the class-I aminoacyl-tRNA synthetase family. Monomer. Zn(2+) serves as cofactor.

It is found in the cytoplasm. The enzyme catalyses tRNA(Cys) + L-cysteine + ATP = L-cysteinyl-tRNA(Cys) + AMP + diphosphate. This is Cysteine--tRNA ligase from Anaeromyxobacter dehalogenans (strain 2CP-C).